We begin with the raw amino-acid sequence, 307 residues long: tRNA dimethylallyltransferase 2 (307 aa).

ATP is bound at residue 11–18 (GPTASGKT). 13–18 (TASGKT) contributes to the substrate binding site. The tract at residues 36-39 (DSRQ) is interaction with substrate tRNA.

The protein belongs to the IPP transferase family. In terms of assembly, monomer. It depends on Mg(2+) as a cofactor.

The enzyme catalyses adenosine(37) in tRNA + dimethylallyl diphosphate = N(6)-dimethylallyladenosine(37) in tRNA + diphosphate. Functionally, catalyzes the transfer of a dimethylallyl group onto the adenine at position 37 in tRNAs that read codons beginning with uridine, leading to the formation of N6-(dimethylallyl)adenosine (i(6)A). This chain is tRNA dimethylallyltransferase 2, found in Phocaeicola vulgatus (strain ATCC 8482 / DSM 1447 / JCM 5826 / CCUG 4940 / NBRC 14291 / NCTC 11154) (Bacteroides vulgatus).